The primary structure comprises 133 residues: Ribosome-binding factor A (133 aa).

This sequence belongs to the RbfA family. Monomer. Binds 30S ribosomal subunits, but not 50S ribosomal subunits or 70S ribosomes.

It is found in the cytoplasm. One of several proteins that assist in the late maturation steps of the functional core of the 30S ribosomal subunit. Associates with free 30S ribosomal subunits (but not with 30S subunits that are part of 70S ribosomes or polysomes). Required for efficient processing of 16S rRNA. May interact with the 5'-terminal helix region of 16S rRNA. The polypeptide is Ribosome-binding factor A (Proteus mirabilis (strain HI4320)).